A 587-amino-acid chain; its full sequence is MAVTDTESPHLGEITCGTLLEKLQEIWDEVGESDDERDKLLLQIEQECLDVYKRKVEQAAKSRAELLQTLSDANAELSSLTMSLGDKSLVGIPDKSSGTIKEQLAAIAPALEQLWQQKEERVREFSDVQSQIQKICGDIAGGLSNEVPIVDESDLSLKKLDDFQSQLQELQKEKSDRLRKVLEFVSTVHDLCAVLGLDFLSTVTEVHPSLDEDTSVQSKSISNETLSRLAKTVLTLKDDKKQRLQKLQELATQLIDLWNLMDTPDEERELFDHVTCNISSSVDEVTVPGALARDLIEQAEVEVDRLDQLKASRMKEIAFKKQSELEEIYARAHVEVNPESARERIMSLIDSGNVEPTELLADMDSQISKAKEEAFSRKDILDRVEKWMSACEEESWLEDYNRDQNRYSASRGAHLNLKRAEKARILVSKIPAMVDTLVAKTRAWEEEHSMSFAYDGVPLLAMLDEYGMLRQEREEEKRRLREQKKVQEQPHVEQESAFSTRPSPARPVSAKKTVGPRANNGGANGTHNRRLSLNANQNGSRSTAKEAGRRETLNRPAAPTNYVAISKEEAASSPVSGAADHQVPASP.

5 coiled-coil regions span residues 46–84 (QECLDVYKRKVEQAAKSRAELLQTLSDANAELSSLTMSL), 151–181 (DESDLSLKKLDDFQSQLQELQKEKSDRLRKV), 234–257 (LTLKDDKKQRLQKLQELATQLIDL), 290–317 (ALARDLIEQAEVEVDRLDQLKASRMKEI), and 461–489 (AMLDEYGMLRQEREEEKRRLREQKKVQEQ). Residues 474–494 (EEEKRRLREQKKVQEQPHVEQ) are compositionally biased toward basic and acidic residues. A disordered region spans residues 474-587 (EEEKRRLREQ…AADHQVPASP (114 aa)). S503 carries the post-translational modification Phosphoserine. Position 526 is a phosphothreonine (T526). Polar residues predominate over residues 531-542 (LSLNANQNGSRS). Residues S532 and S540 each carry the phosphoserine modification. Residues T543 and T552 each carry the phosphothreonine modification. Basic and acidic residues predominate over residues 543 to 553 (TAKEAGRRETL). S573, S576, and S586 each carry phosphoserine.

This sequence belongs to the MAP65/ASE1 family. Forms dimer. Binds to MT, mostly with coaligned MT, both between parallel or antiparallel, forming thick bundles. Interacts with the alpha-tubulin subunit of the tubulin heterodimer. Bundles polymerized MT via the formation of 25-nm crossbridges at specific stages of the cell cycle (e.g. bundles microtubules in interphase, anaphase and telophase but does not bind microtubules in prophase or metaphase), at the plus-end, the minus-end, or along the entire length of MT, and along phragmoplast MT. Interacts with SH3P1 and MPK4. In terms of processing, basal phosphorylation at all stages of the cell cycle. MT-binding properties inhibited by hyperphosphorylation mediated by CDKs and/or MAPKs (e.g. ANP2, ANP3, MPK4 and MPK6) during prometaphase and metaphase. As to expression, expressed in all organs and tissues with the exception of sepals and anthers. Bound to subsets of microtubules in the cells of root epidermis, hypocotyl and cotyledons (at protein level).

Its subcellular location is the nucleus. The protein localises to the cytoplasm. The protein resides in the cytoskeleton. It is found in the spindle. It localises to the phragmoplast. Its subcellular location is the cell cortex. Its function is as follows. Microtubule-associated protein that bundle and stabilize adjacent microtubules (MT) of the cell cortex. Enhances MT nucleation. Can also bind to tubulin dimers and promotes their polymerization. Confers MT resistance to the drug propyzamide and cold conditions. Plays a role in the central spindle at anaphase to early cytokinesis but is not essential at the midline of the phragmoplast at later stages. Represses metaphase spindle organization and the transition to anaphase in dephosphorylated active form. Promotes the formation of a planar network of antiparallel microtubules. May be involved in stomatal movement modulation by regulating the dynamic and arrangement of cortical MT. The polypeptide is 65-kDa microtubule-associated protein 1 (MAP65-1) (Arabidopsis thaliana (Mouse-ear cress)).